Reading from the N-terminus, the 120-residue chain is NAD(P)H-quinone oxidoreductase subunit 3 (120 aa).

3 consecutive transmembrane segments (helical) span residues 10-30 (FLGF…TNLI), 64-84 (MFAL…PWAV), and 89-109 (LGLL…IALA).

It belongs to the complex I subunit 3 family. In terms of assembly, NDH-1 can be composed of about 15 different subunits; different subcomplexes with different compositions have been identified which probably have different functions.

Its subcellular location is the cellular thylakoid membrane. The enzyme catalyses a plastoquinone + NADH + (n+1) H(+)(in) = a plastoquinol + NAD(+) + n H(+)(out). The catalysed reaction is a plastoquinone + NADPH + (n+1) H(+)(in) = a plastoquinol + NADP(+) + n H(+)(out). Its function is as follows. NDH-1 shuttles electrons from an unknown electron donor, via FMN and iron-sulfur (Fe-S) centers, to quinones in the respiratory and/or the photosynthetic chain. The immediate electron acceptor for the enzyme in this species is believed to be plastoquinone. Couples the redox reaction to proton translocation, and thus conserves the redox energy in a proton gradient. Cyanobacterial NDH-1 also plays a role in inorganic carbon-concentration. The polypeptide is NAD(P)H-quinone oxidoreductase subunit 3 (Prochlorococcus marinus (strain MIT 9301)).